A 221-amino-acid polypeptide reads, in one-letter code: Vesicle transport v-SNARE 11 (221 aa).

Serine 2 carries the N-acetylserine modification. Over 2–198 (SDVFDGYERQ…MTRRMNKNKW (197 aa)) the chain is Cytoplasmic. The stretch at 32 to 93 (EQKKQKLSEI…FKTEVKRITS (62 aa)) forms a coiled coil. A helical; Anchor for type IV membrane protein transmembrane segment spans residues 199 to 219 (TIGAIIIALIAAIFIILYFKL). Residues 220–221 (TK) lie on the Vesicular side of the membrane.

This sequence belongs to the VTI1 family. In terms of assembly, forms SNARE complexes with the t-SNAREs SYP51 and either SYP21 or SYP22 in the PVC, and with a much lower affinity with SYP61 in the TGN. Does not interact with SYP41, SYP42 or VPS45. Binds to EPSIN1. Interacts with SCYL2B. In terms of tissue distribution, expressed in roots, stems, flowers and leaves.

The protein localises to the golgi apparatus. It is found in the trans-Golgi network membrane. It localises to the prevacuolar compartment membrane. Its subcellular location is the vacuole membrane. Functions as a v-SNARE responsible for targeting AtELP-containing vesicles from the trans-Golgi network (TGN) to the prevacuolar compartment (PVC) and mediates liposome fusion. May be also involved in retrograde traffic to the cis-Golgi. Promotes the formation of vacuolar membrane 'bulbs'. Necessary to deliver proteins to the lytic vacuole, but seems not involved in storage proteins transport. Required for amyloplast sedimentation in the endodermis during shoot gravitropism, which are thus acting as statoliths. Expression in the endodermis is essential for the shoot gravitropic response, whereas expression in other tissues may be responsible for the correct stem and leaf shape. The protein is Vesicle transport v-SNARE 11 of Arabidopsis thaliana (Mouse-ear cress).